The sequence spans 529 residues: FAD-binding monooxygenase BOA2 (529 aa).

FAD contacts are provided by residues Val-58–Lys-61, Asp-70–Ile-71, and Tyr-76. Ala-68–Asp-70 is an NADP(+) binding site. NADP(+) is bound by residues Thr-198–Gln-204 and Arg-221–Ser-222.

It belongs to the FAD-binding monooxygenase family. FAD serves as cofactor.

It functions in the pathway polyketide biosynthesis. In terms of biological role, FAD-binding monooxygenase; part of the gene cluster A that mediates the biosynthesis of botcinic acid and its botcinin derivatives, acetate-derived polyketides that contribute to virulence when combined with the sesquiterpene botrydial. Botcinic acid and its derivatives have been shown to induce chlorosis and necrosis during host plant infection, but also have antifungal activities. Two polyketide synthases, BOA6 and BOA9, are involved in the biosynthesis of botcinins. BOA6 mediates the formation of the per-methylated tetraketide core by condensation of four units of malonyl-CoA with one unit of acetyl-CoA, which would be methylated in activated methylene groups to yield a bicyclic acid intermediate that could then either be converted to botrylactone derivatives or lose the starter acetate unit through a retro-Claisen type C-C bond cleavage to yield botcinin derivatives. The second polyketide synthase, BOA9, is probably required for the biosynthesis of the tetraketide side chain of botcinins. The methyltransferase (MT) domain within BOA6 is probably responsible for the incorporation of four methyl groups. The trans-enoyl reductase BOA5 might take over the enoyl reductase function of BOA6 that misses an ER domain. The monooxygenases BOA2, BOA3 and BOA4 might be involved in further hydroxylations at C4, C5 and C8, whereas BOA7, close to BOA9, could potentially be involved in the hydroxylation at C4 in the side chain of botcinins. The polypeptide is FAD-binding monooxygenase BOA2 (Botryotinia fuckeliana (strain B05.10) (Noble rot fungus)).